Here is a 284-residue protein sequence, read N- to C-terminus: ADP-polyphosphate phosphotransferase 3 (284 aa).

2 stretches are compositionally biased toward basic and acidic residues: residues 1 to 22 (MDKHTDDRKKNNHWKAEDRKSA) and 260 to 277 (DLGKRQKRPADFEGDTRR). 2 disordered regions span residues 1–32 (MDKHTDDRKKNNHWKAEDRKSAATEASETRSG) and 260–284 (DLGKRQKRPADFEGDTRRRTVPNLF).

Belongs to the polyphosphate kinase 2 (PPK2) family. Class I subfamily.

It carries out the reaction [phosphate](n) + ATP = [phosphate](n+1) + ADP. It catalyses the reaction [phosphate](n) + GTP = [phosphate](n+1) + GDP. Uses inorganic polyphosphate (polyP) as a donor to convert ADP to ATP. Can also convert GDP to GTP, with lower efficiency. The chain is ADP-polyphosphate phosphotransferase 3 from Rhizobium meliloti (strain 1021) (Ensifer meliloti).